The sequence spans 513 residues: ATP synthase subunit alpha (513 aa).

169 to 176 provides a ligand contact to ATP; the sequence is GDRQIGKT.

This sequence belongs to the ATPase alpha/beta chains family. F-type ATPases have 2 components, CF(1) - the catalytic core - and CF(0) - the membrane proton channel. CF(1) has five subunits: alpha(3), beta(3), gamma(1), delta(1), epsilon(1). CF(0) has three main subunits: a(1), b(2) and c(9-12). The alpha and beta chains form an alternating ring which encloses part of the gamma chain. CF(1) is attached to CF(0) by a central stalk formed by the gamma and epsilon chains, while a peripheral stalk is formed by the delta and b chains.

The protein localises to the cell inner membrane. The enzyme catalyses ATP + H2O + 4 H(+)(in) = ADP + phosphate + 5 H(+)(out). Its function is as follows. Produces ATP from ADP in the presence of a proton gradient across the membrane. The alpha chain is a regulatory subunit. This is ATP synthase subunit alpha from Francisella tularensis subsp. tularensis (strain WY96-3418).